Here is a 303-residue protein sequence, read N- to C-terminus: Porphobilinogen deaminase (303 aa).

At Cys241 the chain carries S-(dipyrrolylmethanemethyl)cysteine.

Belongs to the HMBS family. In terms of assembly, monomer. It depends on dipyrromethane as a cofactor.

It carries out the reaction 4 porphobilinogen + H2O = hydroxymethylbilane + 4 NH4(+). It functions in the pathway porphyrin-containing compound metabolism; protoporphyrin-IX biosynthesis; coproporphyrinogen-III from 5-aminolevulinate: step 2/4. Its pathway is porphyrin-containing compound metabolism; chlorophyll biosynthesis. Tetrapolymerization of the monopyrrole PBG into the hydroxymethylbilane pre-uroporphyrinogen in several discrete steps. This chain is Porphobilinogen deaminase, found in Roseiflexus sp. (strain RS-1).